Here is a 140-residue protein sequence, read N- to C-terminus: Nucleoside diphosphate kinase (140 aa).

ATP contacts are provided by lysine 11, phenylalanine 59, arginine 87, threonine 93, arginine 104, and asparagine 114. Histidine 117 serves as the catalytic Pros-phosphohistidine intermediate.

Belongs to the NDK family. As to quaternary structure, homotetramer. Mg(2+) serves as cofactor.

It localises to the cytoplasm. It catalyses the reaction a 2'-deoxyribonucleoside 5'-diphosphate + ATP = a 2'-deoxyribonucleoside 5'-triphosphate + ADP. The catalysed reaction is a ribonucleoside 5'-diphosphate + ATP = a ribonucleoside 5'-triphosphate + ADP. Major role in the synthesis of nucleoside triphosphates other than ATP. The ATP gamma phosphate is transferred to the NDP beta phosphate via a ping-pong mechanism, using a phosphorylated active-site intermediate. This Maricaulis maris (strain MCS10) (Caulobacter maris) protein is Nucleoside diphosphate kinase.